The following is a 249-amino-acid chain: Precorrin-4 C(11)-methyltransferase (249 aa).

The protein belongs to the precorrin methyltransferase family.

It catalyses the reaction precorrin-4 + S-adenosyl-L-methionine = precorrin-5 + S-adenosyl-L-homocysteine. Its pathway is cofactor biosynthesis; adenosylcobalamin biosynthesis; cob(II)yrinate a,c-diamide from precorrin-2 (aerobic route): step 4/10. In terms of biological role, catalyzes the methylation of C-11 in precorrin-4 to form precorrin-5. The chain is Precorrin-4 C(11)-methyltransferase (cobM) from Rhodococcus erythropolis (Arthrobacter picolinophilus).